A 188-amino-acid chain; its full sequence is ADP-ribosylation factor J (188 aa).

Residues 34–40, 75–79, and 134–137 contribute to the GTP site; these read DGAGKST, DVGGQ, and NKQD.

This sequence belongs to the small GTPase superfamily. Arf family.

It localises to the golgi apparatus. Functionally, GTP-binding protein that may be involved in protein trafficking. May modulate vesicle budding and uncoating within the Golgi apparatus. This is ADP-ribosylation factor J (arrJ) from Dictyostelium discoideum (Social amoeba).